The primary structure comprises 203 residues: Large ribosomal subunit protein bL25 (203 aa).

Belongs to the bacterial ribosomal protein bL25 family. CTC subfamily. Part of the 50S ribosomal subunit; part of the 5S rRNA/L5/L18/L25 subcomplex. Contacts the 5S rRNA. Binds to the 5S rRNA independently of L5 and L18.

Functionally, this is one of the proteins that binds to the 5S RNA in the ribosome where it forms part of the central protuberance. This Cupriavidus pinatubonensis (strain JMP 134 / LMG 1197) (Cupriavidus necator (strain JMP 134)) protein is Large ribosomal subunit protein bL25.